Here is a 687-residue protein sequence, read N- to C-terminus: Light-independent protochlorophyllide reductase subunit B (687 aa).

Asp36 contributes to the [4Fe-4S] cluster binding site. Catalysis depends on Asp441, which acts as the Proton donor. 576 to 577 (GM) is a substrate binding site.

Belongs to the ChlB/BchB/BchZ family. As to quaternary structure, protochlorophyllide reductase is composed of three subunits; ChlL, ChlN and ChlB. Forms a heterotetramer of two ChlB and two ChlN subunits. [4Fe-4S] cluster serves as cofactor.

It localises to the plastid. The protein resides in the chloroplast. It catalyses the reaction chlorophyllide a + oxidized 2[4Fe-4S]-[ferredoxin] + 2 ADP + 2 phosphate = protochlorophyllide a + reduced 2[4Fe-4S]-[ferredoxin] + 2 ATP + 2 H2O. The protein operates within porphyrin-containing compound metabolism; chlorophyll biosynthesis (light-independent). Component of the dark-operative protochlorophyllide reductase (DPOR) that uses Mg-ATP and reduced ferredoxin to reduce ring D of protochlorophyllide (Pchlide) to form chlorophyllide a (Chlide). This reaction is light-independent. The NB-protein (ChlN-ChlB) is the catalytic component of the complex. The protein is Light-independent protochlorophyllide reductase subunit B of Chlamydomonas reinhardtii (Chlamydomonas smithii).